The chain runs to 437 residues: Vacuolar cation/proton exchanger 2 (437 aa).

Positions 1 to 29 (MMGAEKAEGMEELELEEGGGSPSPSPMTA) are disordered. The Cytoplasmic portion of the chain corresponds to 1–65 (MMGAEKAEGM…KWRRALTSVR (65 aa)). Residues 66-86 (VVILQAKINVLLPFGPLAVML) traverse the membrane as a helical segment. Residues 87 to 88 (HY) are Extracellular-facing. Residues 89–109 (LSANHQGWVFLFSLIGITPLA) form a helical membrane-spanning segment. Over 110–126 (ERLGYATEQLALYTGPT) the chain is Cytoplasmic. A helical transmembrane segment spans residues 127–147 (IGGLLNATFGNATEMIISLYA). The interval 136 to 171 (GNATEMIISLYALKNGMIRVVQQSLLGSILSNMLLV) is cation selection. Residues 148–161 (LKNGMIRVVQQSLL) lie on the Extracellular side of the membrane. The chain crosses the membrane as a helical span at residues 162–182 (GSILSNMLLVLGCAFFAGGLV). Residues 183–194 (HPSRDQVFNKAS) lie on the Cytoplasmic side of the membrane. A helical membrane pass occupies residues 195–215 (AVVNSGLLLMAVLGLMFPAVL). Residues 216-228 (HFTHSEVQYGKSE) are Extracellular-facing. The chain crosses the membrane as a helical span at residues 229-249 (VSLSRFSSCIMLVAYASYLFF). Residues 250–281 (QLKSQRSLYSPIGEQEEEVTEDEEEEKEITQG) lie on the Cytoplasmic side of the membrane. The helical transmembrane segment at 282-302 (EAICWLFVLTIWISILSGYLV) threads the bilayer. Over 303–310 (DAIQGASE) the chain is Extracellular. A helical transmembrane segment spans residues 311–331 (SLNMPVAFISVILLPIVGNAA). The interval 328–363 (GNAAEHASAIMFAMKDKLDITLGVAIGSSTQISMFV) is cation selection. At 332–352 (EHASAIMFAMKDKLDITLGVA) the chain is on the cytoplasmic side. Residues 353-373 (IGSSTQISMFVIPFCVVIGWI) form a helical membrane-spanning segment. Over 374 to 379 (MGQQMD) the chain is Extracellular. Residues 380-400 (LNFQLFETATLFITVLVVAFM) form a helical membrane-spanning segment. The Cytoplasmic segment spans residues 401-408 (LQEGTSNY). The helical transmembrane segment at 409–429 (FKGLMLILCYLIVAASFFVHV) threads the bilayer. Topologically, residues 430-437 (DPDSSNNK) are extracellular.

Belongs to the Ca(2+):cation antiporter (CaCA) (TC 2.A.19) family. Cation/proton exchanger (CAX) subfamily. Expressed in roots and shoots.

It is found in the vacuole membrane. In terms of biological role, vacuolar cation/proton exchanger (CAX). Translocates Ca(2+) and other metal ions into vacuoles using the proton gradient formed by H(+)-ATPase and H(+)-pyrophosphatase. This Oryza sativa subsp. japonica (Rice) protein is Vacuolar cation/proton exchanger 2 (CAX2).